A 156-amino-acid chain; its full sequence is Endoribonuclease YbeY (156 aa).

His-105, His-109, and Asp-115 together coordinate Zn(2+).

The protein belongs to the endoribonuclease YbeY family. Zn(2+) is required as a cofactor.

Its subcellular location is the cytoplasm. Functionally, single strand-specific metallo-endoribonuclease involved in late-stage 70S ribosome quality control and in maturation of the 3' terminus of the 16S rRNA. The polypeptide is Endoribonuclease YbeY (Chlorobium chlorochromatii (strain CaD3)).